Reading from the N-terminus, the 112-residue chain is Mitochondrial import inner membrane translocase subunit TIM14-1 (112 aa).

N-acetylalanine is present on alanine 2. A helical transmembrane segment spans residues alanine 7–glutamine 23. A J domain is found at glutamate 53 to phenylalanine 112.

This sequence belongs to the TIM14 family. Probable component of the PAM complex at least composed of a mitochondrial HSP70 protein, TIMM44 and TIMM14. The complex interacts with the TIMM23 component of the TIM17:23 complex.

Its subcellular location is the mitochondrion. It localises to the mitochondrion inner membrane. Its function is as follows. Component of the PAM complex, a complex required for the translocation of transit peptide-containing proteins from the inner membrane into the mitochondrial matrix in an ATP-dependent manner. This chain is Mitochondrial import inner membrane translocase subunit TIM14-1 (TIM14-1), found in Arabidopsis thaliana (Mouse-ear cress).